Consider the following 254-residue polypeptide: Anti-sigma-M factor RsmA (254 aa).

Topologically, residues M1 to R112 are cytoplasmic. Residues M113–V133 form a helical membrane-spanning segment. Topologically, residues D134 to A254 are extracellular.

In terms of assembly, interacts with ECF RNA polymerase sigma factor SigM; this should inhibit the interaction of SigM with the RNA polymerase catalytic core. Post-translationally, probably cleaved within the membrane by Rip1 near the cytoplasmic membrane interface.

The protein localises to the cell membrane. Its function is as follows. An anti-sigma factor for extracytoplasmic function (ECF) sigma factor SigM. ECF sigma factors are held in an inactive form by an anti-sigma factor until released by regulated intramembrane proteolysis (RIP). RIP occurs when an extracytoplasmic signal triggers a concerted proteolytic cascade to transmit information and elicit cellular responses. The membrane-spanning regulatory substrate protein is first cut extracytoplasmically (site-1 protease, S1P), then within the membrane itself (site-2 protease, S2P, Rip1), while cytoplasmic proteases finish degrading the regulatory protein, liberating the sigma factor. The chain is Anti-sigma-M factor RsmA (rsmA) from Mycobacterium tuberculosis (strain ATCC 35801 / TMC 107 / Erdman).